A 3391-amino-acid chain; its full sequence is Genome polyprotein (3391 aa).

The interval 1–15 is interaction with host EXOC1; that stretch reads MNNQRKKTARPSFNM. Residues 1–101 lie on the Cytoplasmic side of the membrane; that stretch reads MNNQRKKTAR…LNIMNRRKRS (101 aa). A hydrophobic; homodimerization of capsid protein C region spans residues 37–72; sequence LLSGQGPMKLVMAFIAFLRFLAIPPTAGILARWGSF. Positions 101 to 114 are cleaved as a propeptide — ER anchor for the capsid protein C, removed in mature form by serine protease NS3; that stretch reads SVTMLLMLLPTALA. Residues 102–119 traverse the membrane as a helical segment; the sequence is VTMLLMLLPTALAFHLTT. Topologically, residues 120–242 are extracellular; it reads RGGEPHMIVS…QIQRVETWAL (123 aa). Asparagine 183 carries an N-linked (GlcNAc...) asparagine; by host glycan. The chain crosses the membrane as a helical span at residues 243-260; the sequence is RHPGFTVIALFLAHAIGT. Residue serine 261 is a topological domain, cytoplasmic. The helical transmembrane segment at 262-280 threads the bilayer; sequence ITQKGIIFILLMLVTPSMA. Residues 281 to 725 are Extracellular-facing; sequence MRCVGIGSRD…HQVFGTAYGV (445 aa). Cystine bridges form between cysteine 283-cysteine 310, cysteine 340-cysteine 401, cysteine 354-cysteine 385, and cysteine 372-cysteine 396. A glycan (N-linked (GlcNAc...) asparagine; by host) is linked at asparagine 347. The segment at 378–391 is fusion peptide; sequence DRGWGNGCGLFGKG. N-linked (GlcNAc...) asparagine; by host glycosylation occurs at asparagine 433. Cystine bridges form between cysteine 465-cysteine 565 and cysteine 582-cysteine 613. A helical transmembrane segment spans residues 726–746; that stretch reads LFSGVSWTMKIGIGILLTWLG. Topologically, residues 747–752 are cytoplasmic; sequence LNSRST. The chain crosses the membrane as a helical span at residues 753-773; sequence SLSMTCIAVGMVTLYLGVMVQ. Over 774-1198 the chain is Extracellular; that stretch reads ADSGCVINWK…NASDRMGMGT (425 aa). 6 disulfides stabilise this stretch: cysteine 778-cysteine 789, cysteine 829-cysteine 917, cysteine 953-cysteine 997, cysteine 1054-cysteine 1103, cysteine 1065-cysteine 1087, and cysteine 1086-cysteine 1090. N-linked (GlcNAc...) asparagine; by host glycans are attached at residues asparagine 904 and asparagine 981. Asparagine 1189 is a glycosylation site (N-linked (GlcNAc...) asparagine; by host). Residues 1199–1219 form a helical membrane-spanning segment; the sequence is TYLALMATFKMRPMFAVGLLF. Over 1220-1225 the chain is Cytoplasmic; it reads RRLTSR. Residues 1226 to 1244 traverse the membrane as a helical segment; it reads EVLLLTIGLSLVASVELPN. The Lumenal portion of the chain corresponds to 1245–1268; sequence SLEELGDGLAMGIMILKLLTDFQS. The helical transmembrane segment at 1269 to 1289 threads the bilayer; that stretch reads HQLWATLLSLTFVKTTFSLHY. A topological domain (cytoplasmic) is located at residue alanine 1290. A helical transmembrane segment spans residues 1291 to 1309; it reads WKTMAMVLSIVSLFPLCLS. The Lumenal segment spans residues 1310-1314; it reads TTSQK. The chain crosses the membrane as a helical span at residues 1315 to 1335; the sequence is TTWLPVLLGSLGCKPLTMFLI. Over 1336–1345 the chain is Cytoplasmic; sequence AENKIWGRKS. Residues 1346 to 1366 traverse the membrane as a helical segment; that stretch reads WPLNEGIMAVGIVSILLSSLL. Over 1367-1369 the chain is Lumenal; that stretch reads KND. A helical membrane pass occupies residues 1370–1390; sequence VPLAGPLIAGGMLIACYVISG. The Cytoplasmic portion of the chain corresponds to 1391–1446; it reads SSADLSLEKAAEVSWEEEAEHSGASHNILVEVQDDGTMKIKDEERDDTLTILLKAT. Residues 1397-1436 form an interacts with and activates NS3 protease region; the sequence is LEKAAEVSWEEEAEHSGASHNILVEVQDDGTMKIKDEERD. The segment at residues 1447–1467 is an intramembrane region (helical); it reads LLAVSGVYPLSIPATLFVWYF. Over 1468 to 2147 the chain is Cytoplasmic; the sequence is WQKKKQRSGV…MEELPDTIET (680 aa). The Peptidase S7 domain maps to 1475–1652; sequence SGVLWDTPSP…KASQEGPLPE (178 aa). Catalysis depends on charge relay system; for serine protease NS3 activity residues histidine 1525, aspartate 1549, and serine 1609. Positions 1655–1811 constitute a Helicase ATP-binding domain; sequence DEVFRKRNLT…QSNAVIQDEE (157 aa). The tract at residues 1659–1662 is important for RNA-binding; that stretch reads RKRN. An ATP-binding site is contributed by 1668–1675; sequence LHPGSGKT. Positions 1759 to 1762 match the DEAH box motif; sequence DEAH. Residues 1821-1988 form the Helicase C-terminal domain; the sequence is SGYEWITDFP…IIPALFEPER (168 aa). Position 1863 is an N6-acetyllysine; by host (lysine 1863). Residues 2148-2168 form a helical membrane-spanning segment; sequence LMLLALIAVLTGGVTLFFLSG. Over 2169 to 2170 the chain is Lumenal; sequence KG. An intramembrane region (helical) is located at residues 2171–2191; sequence LGKTSIGLLCVMASSVLLWMA. Position 2192 (serine 2192) is a topological domain, lumenal. A helical membrane pass occupies residues 2193–2213; sequence VEPHWIAASIILEFFLMVLLI. The Cytoplasmic segment spans residues 2214-2228; sequence PEPDRQRTPQDNQLA. Residues 2229 to 2249 traverse the membrane as a helical segment; that stretch reads YVVIGLLFMILTVAANEMGLL. Topologically, residues 2250-2275 are lumenal; that stretch reads ETTKKDLGIGHVAAENHHHATMLDVD. Residues 2276 to 2296 constitute an intramembrane region (helical); that stretch reads LRPASAWTLYAVATTVITPMM. Over 2297–2348 the chain is Lumenal; it reads RHTIENTTANISLTAIANQAAILMGLDKGWPISKMDIGVPLLALGCYSQVNP. N-linked (GlcNAc...) asparagine; by host glycans are attached at residues asparagine 2302 and asparagine 2306. Residues 2349-2369 form a helical membrane-spanning segment; the sequence is LTLTAAVLMLVAHYAIIGPGL. Over 2370–2414 the chain is Cytoplasmic; that stretch reads QAKATREAQKRTAAGIMKNPTVDGIVAIDLDPVVYDAKFEKQLGQ. Residues 2415–2435 form a helical membrane-spanning segment; it reads IMLLILCTSQILLMRTTWALC. At 2436–2460 the chain is on the lumenal side; the sequence is ESITLATGPLTTLWEGSPGKFWNTT. Residue asparagine 2458 is glycosylated (N-linked (GlcNAc...) asparagine; by host). A helical membrane pass occupies residues 2461-2481; the sequence is IAVSMANIFRGSYLAGAGLAF. The Cytoplasmic segment spans residues 2482 to 3391; sequence SLMKSLGGGR…NESDPEGALW (910 aa). Residues 2494 to 2755 form the mRNA cap 0-1 NS5-type MT domain; it reads TGAKGKHWER…DVDLGAGTRH (262 aa). Serine 2548 lines the S-adenosyl-L-methionine pocket. Serine 2548 is subject to Phosphoserine. The active-site For 2'-O-MTase activity is the lysine 2553. The SUMO-interacting motif motif lies at 2569-2572; sequence VIDL. S-adenosyl-L-methionine-binding residues include glycine 2578, tryptophan 2579, threonine 2596, lysine 2597, aspartate 2623, and valine 2624. Residue aspartate 2638 is the For 2'-O-MTase activity of the active site. Residue isoleucine 2639 coordinates S-adenosyl-L-methionine. Residues lysine 2672 and glutamate 2708 each act as for 2'-O-MTase activity in the active site. Tyrosine 2710 contacts S-adenosyl-L-methionine. Glutamate 2929, histidine 2933, cysteine 2938, and cysteine 2941 together coordinate Zn(2+). The region spanning 3019-3168 is the RdRp catalytic domain; sequence GNMYADDTAG…KPIDDRFATA (150 aa). Zn(2+)-binding residues include histidine 3203, cysteine 3219, and cysteine 3338.

This sequence in the N-terminal section; belongs to the class I-like SAM-binding methyltransferase superfamily. mRNA cap 0-1 NS5-type methyltransferase family. Homodimer. Interacts (via N-terminus) with host EXOC1 (via C-terminus); this interaction results in EXOC1 degradation through the proteasome degradation pathway. In terms of assembly, forms heterodimers with envelope protein E in the endoplasmic reticulum and Golgi. As to quaternary structure, homodimer; in the endoplasmic reticulum and Golgi. Interacts with protein prM. Interacts with non-structural protein 1. Homodimer; Homohexamer when secreted. Interacts with envelope protein E. In terms of assembly, interacts (via N-terminus) with serine protease NS3. As to quaternary structure, forms a heterodimer with serine protease NS3. May form homooligomers. Forms a heterodimer with NS2B. Interacts with NS4B. Interacts with unphosphorylated RNA-directed RNA polymerase NS5; this interaction stimulates RNA-directed RNA polymerase NS5 guanylyltransferase activity. Interacts with host SHFL. In terms of assembly, interacts with host MAVS; this interaction inhibits the synthesis of IFN-beta. Interacts with host SHFL. Interacts with host AUP1; the interaction occurs in the presence of Dengue virus NS4B and induces lipophagy which facilitates production of virus progeny particles. As to quaternary structure, interacts with serine protease NS3. Homodimer. Interacts with host STAT2; this interaction inhibits the phosphorylation of the latter, and, when all viral proteins are present (polyprotein), targets STAT2 for degradation. Interacts with serine protease NS3. In terms of processing, specific enzymatic cleavages in vivo yield mature proteins. Cleavages in the lumen of endoplasmic reticulum are performed by host signal peptidase, whereas cleavages in the cytoplasmic side are performed by serine protease NS3. Signal cleavage at the 2K-4B site requires a prior NS3 protease-mediated cleavage at the 4A-2K site. Cleaved in post-Golgi vesicles by a host furin, releasing the mature small envelope protein M, and peptide pr. This cleavage is incomplete as up to 30% of viral particles still carry uncleaved prM. Post-translationally, N-glycosylated. In terms of processing, N-glycosylated. The excreted form is glycosylated and this is required for efficient secretion of the protein from infected cells. Acetylated by host KAT5. Acetylation modulates NS3 RNA-binding and unwinding activities and plays an important positive role for viral replication. Post-translationally, sumoylation of RNA-directed RNA polymerase NS5 increases NS5 protein stability allowing proper viral RNA replication. In terms of processing, phosphorylated on serines residues. This phosphorylation may trigger NS5 nuclear localization.

The protein localises to the virion. Its subcellular location is the host nucleus. The protein resides in the host cytoplasm. It localises to the host perinuclear region. It is found in the secreted. The protein localises to the virion membrane. Its subcellular location is the host endoplasmic reticulum membrane. The protein resides in the host mitochondrion. The catalysed reaction is Selective hydrolysis of -Xaa-Xaa-|-Yaa- bonds in which each of the Xaa can be either Arg or Lys and Yaa can be either Ser or Ala.. It catalyses the reaction RNA(n) + a ribonucleoside 5'-triphosphate = RNA(n+1) + diphosphate. It carries out the reaction a ribonucleoside 5'-triphosphate + H2O = a ribonucleoside 5'-diphosphate + phosphate + H(+). The enzyme catalyses ATP + H2O = ADP + phosphate + H(+). The catalysed reaction is a 5'-end (5'-triphosphoguanosine)-ribonucleoside in mRNA + S-adenosyl-L-methionine = a 5'-end (N(7)-methyl 5'-triphosphoguanosine)-ribonucleoside in mRNA + S-adenosyl-L-homocysteine. It catalyses the reaction a 5'-end (N(7)-methyl 5'-triphosphoguanosine)-ribonucleoside in mRNA + S-adenosyl-L-methionine = a 5'-end (N(7)-methyl 5'-triphosphoguanosine)-(2'-O-methyl-ribonucleoside) in mRNA + S-adenosyl-L-homocysteine + H(+). In terms of biological role, plays a role in virus budding by binding to the cell membrane and gathering the viral RNA into a nucleocapsid that forms the core of a mature virus particle. During virus entry, may induce genome penetration into the host cytoplasm after hemifusion induced by the surface proteins. Can migrate to the cell nucleus where it modulates host functions. Overcomes the anti-viral effects of host EXOC1 by sequestering and degrading the latter through the proteasome degradation pathway. Its function is as follows. Inhibits RNA silencing by interfering with host Dicer. Prevents premature fusion activity of envelope proteins in trans-Golgi by binding to envelope protein E at pH6.0. After virion release in extracellular space, gets dissociated from E dimers. Functionally, acts as a chaperone for envelope protein E during intracellular virion assembly by masking and inactivating envelope protein E fusion peptide. prM is the only viral peptide matured by host furin in the trans-Golgi network probably to avoid catastrophic activation of the viral fusion activity in acidic Golgi compartment prior to virion release. prM-E cleavage is inefficient, and many virions are only partially matured. These uncleaved prM would play a role in immune evasion. In terms of biological role, may play a role in virus budding. Exerts cytotoxic effects by activating a mitochondrial apoptotic pathway through M ectodomain. May display a viroporin activity. Its function is as follows. Binds to host cell surface receptor and mediates fusion between viral and cellular membranes. Envelope protein is synthesized in the endoplasmic reticulum in the form of heterodimer with protein prM. They play a role in virion budding in the ER, and the newly formed immature particle is covered with 60 spikes composed of heterodimer between precursor prM and envelope protein E. The virion is transported to the Golgi apparatus where the low pH causes dissociation of PrM-E heterodimers and formation of E homodimers. prM-E cleavage is inefficient, and many virions are only partially matured. These uncleaved prM would play a role in immune evasion. Involved in immune evasion, pathogenesis and viral replication. Once cleaved off the polyprotein, is targeted to three destinations: the viral replication cycle, the plasma membrane and the extracellular compartment. Essential for viral replication. Required for formation of the replication complex and recruitment of other non-structural proteins to the ER-derived membrane structures. Excreted as a hexameric lipoparticle that plays a role against host immune response. Antagonizing the complement function. Binds to the host macrophages and dendritic cells. Inhibits signal transduction originating from Toll-like receptor 3 (TLR3). Functionally, disrupts the host endothelial glycocalyx layer of host pulmonary microvascular endothelial cells, inducing degradation of sialic acid and shedding of heparan sulfate proteoglycans. NS1 induces expression of sialidases, heparanase, and activates cathepsin L, which activates heparanase via enzymatic cleavage. These effects are probably linked to the endothelial hyperpermeability observed in severe dengue disease. In terms of biological role, component of the viral RNA replication complex that functions in virion assembly and antagonizes the host immune response. Its function is as follows. Required cofactor for the serine protease function of NS3. May have membrane-destabilizing activity and form viroporins. Displays three enzymatic activities: serine protease, NTPase and RNA c. NS3 serine protease, in association with NS2B, performs its autocleavage and cleaves the polyprotein at dibasic sites in the cytoplasm: C-prM, NS2A-NS2B, NS2B-NS3, NS3-NS4A, NS4A-2K and NS4B-NS5. NS3 RNA helicase binds RNA and unwinds dsRNA in the 3' to 5' direction. Functionally, regulates the ATPase activity of the NS3 helicase activity. NS4A allows NS3 helicase to conserve energy during unwinding. Plays a role in the inhibition of the host innate immune response. Interacts with host MAVS and thereby prevents the interaction between RIGI and MAVS. In turn, IFN-beta production is impaired. Interacts with host AUP1 which mediates induction of lipophagy in host cells and facilitates production of virus progeny particles. In terms of biological role, functions as a signal peptide for NS4B and is required for the interferon antagonism activity of the latter. Its function is as follows. Induces the formation of ER-derived membrane vesicles where the viral replication takes place. Inhibits interferon (IFN)-induced host STAT1 phosphorylation and nuclear translocation, thereby preventing the establishment of cellular antiviral state by blocking the IFN-alpha/beta pathway. Replicates the viral (+) and (-) RNA genome, and performs the capping of genomes in the cytoplasm. NS5 methylates viral RNA cap at guanine N-7 and ribose 2'-O positions. Besides its role in RNA genome replication, also prevents the establishment of cellular antiviral state by blocking the interferon-alpha/beta (IFN-alpha/beta) signaling pathway. Inhibits host TYK2 and STAT2 phosphorylation, thereby preventing activation of JAK-STAT signaling pathway. The sequence is that of Genome polyprotein from Aedes aegypti (Yellowfever mosquito).